Reading from the N-terminus, the 703-residue chain is Phosphoribosylformylglycinamidine synthase subunit PurL (703 aa).

H36 is an active-site residue. ATP is bound by residues Y39 and K80. Residue E82 coordinates Mg(2+). Residues S83 to H86 and R105 contribute to the substrate site. H84 acts as the Proton acceptor in catalysis. D106 is a binding site for Mg(2+). Position 226 (Q226) interacts with substrate. Residue D252 coordinates Mg(2+). Position 294-296 (E294–Q296) interacts with substrate. Positions 468 and 505 each coordinate ATP. S508 contacts substrate.

It belongs to the FGAMS family. In terms of assembly, monomer. Part of the FGAM synthase complex composed of 1 PurL, 1 PurQ and 2 PurS subunits.

The protein resides in the cytoplasm. The enzyme catalyses N(2)-formyl-N(1)-(5-phospho-beta-D-ribosyl)glycinamide + L-glutamine + ATP + H2O = 2-formamido-N(1)-(5-O-phospho-beta-D-ribosyl)acetamidine + L-glutamate + ADP + phosphate + H(+). It participates in purine metabolism; IMP biosynthesis via de novo pathway; 5-amino-1-(5-phospho-D-ribosyl)imidazole from N(2)-formyl-N(1)-(5-phospho-D-ribosyl)glycinamide: step 1/2. Part of the phosphoribosylformylglycinamidine synthase complex involved in the purines biosynthetic pathway. Catalyzes the ATP-dependent conversion of formylglycinamide ribonucleotide (FGAR) and glutamine to yield formylglycinamidine ribonucleotide (FGAM) and glutamate. The FGAM synthase complex is composed of three subunits. PurQ produces an ammonia molecule by converting glutamine to glutamate. PurL transfers the ammonia molecule to FGAR to form FGAM in an ATP-dependent manner. PurS interacts with PurQ and PurL and is thought to assist in the transfer of the ammonia molecule from PurQ to PurL. The protein is Phosphoribosylformylglycinamidine synthase subunit PurL of Sulfurisphaera tokodaii (strain DSM 16993 / JCM 10545 / NBRC 100140 / 7) (Sulfolobus tokodaii).